A 164-amino-acid chain; its full sequence is Ecotin (164 aa).

An N-terminal signal peptide occupies residues 1–20; the sequence is MKMFVPAVVFAALASASAWA. A disulfide bond links Cys72 and Cys109.

This sequence belongs to the protease inhibitor I11 (ecotin) family. Homodimer.

It is found in the periplasm. Its function is as follows. General inhibitor of pancreatic serine proteases: inhibits chymotrypsin, trypsin, elastases, factor X, kallikrein as well as a variety of other proteases. The protein is Ecotin of Salmonella typhi.